A 101-amino-acid polypeptide reads, in one-letter code: uncharacterized protein (101 aa).

Residues 1–21 (MKLSTCCAALLLALASPAVLA) form the signal peptide. Residues 79–94 (RTTSGNVSAPAQSSQD) are compositionally biased toward polar residues. The tract at residues 79–101 (RTTSGNVSAPAQSSQDGAPAEPQ) is disordered.

This is an uncharacterized protein from Escherichia coli (strain K12).